The primary structure comprises 264 residues: uncharacterized protein (264 aa).

Residues His5, His7, Glu93, His134, His158, and Asp208 each coordinate a divalent metal cation.

It belongs to the metallo-dependent hydrolases superfamily. TatD-type hydrolase family. The cofactor is a divalent metal cation.

This is an uncharacterized protein from Mycobacterium tuberculosis (strain ATCC 25618 / H37Rv).